Reading from the N-terminus, the 135-residue chain is Interleukin-4 (135 aa).

A signal peptide spans 1 to 24; sequence MGLTSQLIPVLVCLLVCTSHFVHG. Disulfide bonds link C27/C135, C48/C85, and C70/C105. A glycan (N-linked (GlcNAc...) asparagine) is linked at N62.

Belongs to the IL-4/IL-13 family.

It is found in the secreted. In terms of biological role, participates in at least several B-cell activation processes as well as of other cell types. It is a costimulator of DNA-synthesis. It induces the expression of class II MHC molecules on resting B-cells. It enhances both secretion and cell surface expression of IgE and IgG1. It also regulates the expression of the low affinity Fc receptor for IgE (CD23) on both lymphocytes and monocytes. Positively regulates IL31RA expression in macrophages. Stimulates autophagy in dendritic cells by interfering with mTORC1 signaling and through the induction of RUFY4. This Bos taurus (Bovine) protein is Interleukin-4 (IL4).